Here is a 309-residue protein sequence, read N- to C-terminus: Fructosamine-3-kinase (309 aa).

Position 1 is an N-acetylmethionine (M1). ATP is bound at residue 89–91 (EHL). D217 serves as the catalytic Proton acceptor.

Belongs to the fructosamine kinase family. As to quaternary structure, monomer. Widely expressed. Expressed in erythrocytes.

It carries out the reaction N(6)-(D-fructosyl)-L-lysyl-[protein] + ATP = N(6)-(3-O-phospho-D-fructosyl)-L-lysyl-[protein] + ADP + H(+). The enzyme catalyses N(6)-D-ribulosyl-L-lysyl-[protein] + ATP = N(6)-(3-O-phospho-D-ribulosyl)-L-lysyl-[protein] + ADP + H(+). The catalysed reaction is N(6)-(D-psicosyl)-L-lysyl-[protein] + ATP = N(6)-(3-O-phospho-D-psicosyl)-L-lysyl-[protein] + ADP + H(+). In terms of biological role, fructosamine-3-kinase involved in protein deglycation by mediating phosphorylation of fructoselysine residues on glycated proteins, to generate fructoselysine-3 phosphate. Fructoselysine-3 phosphate adducts are unstable and decompose under physiological conditions. Involved in intracellular deglycation in erythrocytes. Involved in the response to oxidative stress by mediating deglycation of NFE2L2/NRF2, glycation impairing NFE2L2/NRF2 function. Also able to phosphorylate psicosamines and ribulosamines. This chain is Fructosamine-3-kinase, found in Homo sapiens (Human).